Reading from the N-terminus, the 227-residue chain is Transcriptional regulatory protein TdiR (227 aa).

In terms of domain architecture, Response regulatory spans 11-125 (TVFVVDDEAS…DLLDAVNAAL (115 aa)). The residue at position 60 (Asp60) is a 4-aspartylphosphate. One can recognise an HTH luxR-type domain in the interval 141–206 (HLDLLATLSQ…DLMHFVMRGS (66 aa)). A DNA-binding region (H-T-H motif) is located at residues 165–184 (SKEIAKLLGISYKTVEAHRG).

Phosphorylated by TdiS.

Member of the two-component regulatory system TdiR/TdiS, which probably regulates transcription of toluene catabolic genes (bss operon). Binds to DNA. The sequence is that of Transcriptional regulatory protein TdiR (tdiR) from Thauera aromatica.